Here is a 927-residue protein sequence, read N- to C-terminus: Protein unc-45 homolog B (927 aa).

TPR repeat units follow at residues 4-37 (PVQL…ITDK), 41-74 (AVLY…DASD), and 76-108 (KALF…EPKN). ARM repeat units follow at residues 167-206 (DAGA…GMCT), 209-248 (RARA…NIVD), and 746-785 (DKLR…NLAL).

As to expression, detected initially throughout the somites and the heart and gradually also expressed in the jaw, branchial arches and body wall muscles at later embryonic stages.

It is found in the cytoplasm. It localises to the myofibril. The protein localises to the sarcomere. Its subcellular location is the z line. The protein resides in the a band. It is found in the perinuclear region. It localises to the cytosol. Acts as a co-chaperone for HSP90 and is required for proper folding of the myosin motor domain. Plays a role in sarcomere formation during muscle cell development. Is necessary for normal early lens development. The protein is Protein unc-45 homolog B of Xenopus tropicalis (Western clawed frog).